Reading from the N-terminus, the 430-residue chain is Enolase (430 aa).

Q163 is a (2R)-2-phosphoglycerate binding site. Catalysis depends on E205, which acts as the Proton donor. Mg(2+) is bound by residues D242, E287, and D314. (2R)-2-phosphoglycerate contacts are provided by K339, R368, S369, and K390. Residue K339 is the Proton acceptor of the active site.

It belongs to the enolase family. It depends on Mg(2+) as a cofactor.

The protein localises to the cytoplasm. Its subcellular location is the secreted. It localises to the cell surface. The enzyme catalyses (2R)-2-phosphoglycerate = phosphoenolpyruvate + H2O. It participates in carbohydrate degradation; glycolysis; pyruvate from D-glyceraldehyde 3-phosphate: step 4/5. Its function is as follows. Catalyzes the reversible conversion of 2-phosphoglycerate (2-PG) into phosphoenolpyruvate (PEP). It is essential for the degradation of carbohydrates via glycolysis. The sequence is that of Enolase from Exiguobacterium sp. (strain ATCC BAA-1283 / AT1b).